Here is a 292-residue protein sequence, read N- to C-terminus: MPWLQVRLAISPEQAETYEDAFLEVGAVSVTFMDAEDQPIFEPELNTTPLWSHTHLLALFEDGTDAAAVLAHMELLTGGPLPEHHSEVIEDQDWERSWMDNFQPMRFGQRLWIVPSWHAAPEPDAVNLLLDPGLAFGTGTHPTTALCLEWLDGQDLTDSHVLDFGCGSGILAIAALLLGAKEAVGTDIDVQALEASRDNAGRNNIPEGKFPLYLPEQLPQVQADVLVANILAGPLVSLAPQLSSLVKPGGRLALSGILAEQGEDVAAAYAKDFELDPIANRDGWVRISGRRR.

Residues T144, G165, D187, and N229 each coordinate S-adenosyl-L-methionine.

The protein belongs to the methyltransferase superfamily. PrmA family.

The protein resides in the cytoplasm. It catalyses the reaction L-lysyl-[protein] + 3 S-adenosyl-L-methionine = N(6),N(6),N(6)-trimethyl-L-lysyl-[protein] + 3 S-adenosyl-L-homocysteine + 3 H(+). Methylates ribosomal protein L11. This Pseudomonas fluorescens (strain SBW25) protein is Ribosomal protein L11 methyltransferase.